The primary structure comprises 1208 residues: Defective chorion protein, FC125 isoform (1208 aa).

An N-terminal signal peptide occupies residues M1–G19. Disordered regions lie at residues V23–N60, A184–P212, and P268–Y294. Polar residues predominate over residues A32 to D41. Over residues P268–A280 the composition is skewed to low complexity. 5 repeat units span residues Q493–Q518, Q519–Q544, Q545–Q570, Q571–Q596, and Q597–Q622. Residues Q493 to Q788 are 12 X 26 AA approximate tandem repeats, Glu, Met-rich. One copy of the 6; approximate repeat lies at Q623–Q652. The 7; approximate repeat unit spans residues Q653–Q680. The 8; approximate repeat unit spans residues Q681–E696. The 9; approximate repeat unit spans residues D697–Q720. One copy of the 10; approximate repeat lies at Q721–E733. The 11; approximate repeat unit spans residues N734–Q758. A 12; approximate repeat occupies Q759 to Q788. Residues E828 to V839 are compositionally biased toward acidic residues. Disordered regions lie at residues E828–A875, R944–F1010, and V1114–D1208. Residues S957 to Q977 show a composition bias toward polar residues. 2 stretches are compositionally biased toward acidic residues: residues P1163–E1178 and N1194–D1208.

It is found in the secreted. Required for proper assembly of the eggshell. This chain is Defective chorion protein, FC125 isoform, found in Drosophila melanogaster (Fruit fly).